Reading from the N-terminus, the 657-residue chain is DNA mismatch repair protein MutL (657 aa).

This sequence belongs to the DNA mismatch repair MutL/HexB family.

Functionally, this protein is involved in the repair of mismatches in DNA. It is required for dam-dependent methyl-directed DNA mismatch repair. May act as a 'molecular matchmaker', a protein that promotes the formation of a stable complex between two or more DNA-binding proteins in an ATP-dependent manner without itself being part of a final effector complex. The sequence is that of DNA mismatch repair protein MutL from Streptococcus agalactiae serotype Ia (strain ATCC 27591 / A909 / CDC SS700).